Here is a 543-residue protein sequence, read N- to C-terminus: CTP synthase (543 aa).

Residues 1-265 are amidoligase domain; the sequence is MTNYIFVTGG…DQLVVDRFGL (265 aa). Residue serine 13 coordinates CTP. Serine 13 is a UTP binding site. Residues 14 to 19 and aspartate 71 each bind ATP; that span reads SLGKGI. Residues aspartate 71 and glutamate 139 each contribute to the Mg(2+) site. Residues 146-148, 186-191, and lysine 222 contribute to the CTP site; these read DIE and KTKPTQ. UTP-binding positions include 186-191 and lysine 222; that span reads KTKPTQ. Residue 238-240 participates in ATP binding; sequence KDV. Residues 290–541 form the Glutamine amidotransferase type-1 domain; it reads NIGMIGKYVE…VAAAGKYQKE (252 aa). Glycine 351 contributes to the L-glutamine binding site. The Nucleophile; for glutamine hydrolysis role is filled by cysteine 378. Residues 379–382, glutamate 402, and arginine 469 each bind L-glutamine; that span reads LGMQ. Residues histidine 514 and glutamate 516 contribute to the active site.

This sequence belongs to the CTP synthase family. In terms of assembly, homotetramer.

It carries out the reaction UTP + L-glutamine + ATP + H2O = CTP + L-glutamate + ADP + phosphate + 2 H(+). The enzyme catalyses L-glutamine + H2O = L-glutamate + NH4(+). The catalysed reaction is UTP + NH4(+) + ATP = CTP + ADP + phosphate + 2 H(+). The protein operates within pyrimidine metabolism; CTP biosynthesis via de novo pathway; CTP from UDP: step 2/2. Its activity is regulated as follows. Allosterically activated by GTP, when glutamine is the substrate; GTP has no effect on the reaction when ammonia is the substrate. The allosteric effector GTP functions by stabilizing the protein conformation that binds the tetrahedral intermediate(s) formed during glutamine hydrolysis. Inhibited by the product CTP, via allosteric rather than competitive inhibition. Functionally, catalyzes the ATP-dependent amination of UTP to CTP with either L-glutamine or ammonia as the source of nitrogen. Regulates intracellular CTP levels through interactions with the four ribonucleotide triphosphates. The sequence is that of CTP synthase from Alteromonas mediterranea (strain DSM 17117 / CIP 110805 / LMG 28347 / Deep ecotype).